Consider the following 149-residue polypeptide: Nascent polypeptide-associated complex subunit beta-2 (149 aa).

Positions 38-103 (DKDNTKLQAE…PKENTLNGLY (66 aa)) constitute an NAC-A/B domain.

Belongs to the NAC-beta family. Part of the nascent polypeptide-associated complex (NAC), consisting of EGD2 and either EGD1 or BTT1. NAC associates with ribosomes via EGD1 or BTT1.

The protein resides in the cytoplasm. Its subcellular location is the nucleus. Acts as a component of the nascent polypeptide-associated complex (NAC), which promotes mitochondrial protein import by enhancing productive ribosome interactions with the outer mitochondrial membrane. Also blocks the inappropriate interaction of ribosomes translating non-secretory nascent polypeptides with translocation sites in the membrane of the endoplasmic reticulum. BTT1 may act as a transcription factor that exert a negative effect on the expression of several genes that are transcribed by RNA polymerase II. This is Nascent polypeptide-associated complex subunit beta-2 (BTT1) from Saccharomyces cerevisiae (strain ATCC 204508 / S288c) (Baker's yeast).